A 397-amino-acid chain; its full sequence is Subtilisin-like protease 3 (397 aa).

Positions 1-19 (MGCIKVISVFLAAIAAVDA) are cleaved as a signal peptide. Residues 20–116 (RAFFHNRGGS…VEHDRVVKLA (97 aa)) constitute a propeptide that is removed on maturation. In terms of domain architecture, Inhibitor I9 spans 35-116 (SYIVVMKDGV…VEHDRVVKLA (82 aa)). The 272-residue stretch at 126–397 (TWGLGRVSHR…NRLLYNGSGQ (272 aa)) folds into the Peptidase S8 domain. Active-site charge relay system residues include Asp158 and His189. Asn250 carries N-linked (GlcNAc...) asparagine glycosylation. The Charge relay system role is filled by Ser344. Asn393 carries an N-linked (GlcNAc...) asparagine glycan.

The protein belongs to the peptidase S8 family.

Its subcellular location is the secreted. Its function is as follows. Secreted subtilisin-like serine protease with keratinolytic activity that contributes to pathogenicity. The chain is Subtilisin-like protease 3 (SUB3) from Trichophyton equinum (Horse ringworm fungus).